Reading from the N-terminus, the 199-residue chain is Recombination protein RecR (199 aa).

A C4-type zinc finger spans residues 57–72 (CQSCRTFTEETYCPIC). A Toprim domain is found at 81–176 (SVICVVETPA…AVSRIAHGVP (96 aa)).

This sequence belongs to the RecR family.

In terms of biological role, may play a role in DNA repair. It seems to be involved in an RecBC-independent recombinational process of DNA repair. It may act with RecF and RecO. In Shewanella piezotolerans (strain WP3 / JCM 13877), this protein is Recombination protein RecR.